A 253-amino-acid polypeptide reads, in one-letter code: 2-C-methyl-D-erythritol 4-phosphate cytidylyltransferase (253 aa).

Belongs to the IspD/TarI cytidylyltransferase family. IspD subfamily.

The enzyme catalyses 2-C-methyl-D-erythritol 4-phosphate + CTP + H(+) = 4-CDP-2-C-methyl-D-erythritol + diphosphate. It participates in isoprenoid biosynthesis; isopentenyl diphosphate biosynthesis via DXP pathway; isopentenyl diphosphate from 1-deoxy-D-xylulose 5-phosphate: step 2/6. Catalyzes the formation of 4-diphosphocytidyl-2-C-methyl-D-erythritol from CTP and 2-C-methyl-D-erythritol 4-phosphate (MEP). The chain is 2-C-methyl-D-erythritol 4-phosphate cytidylyltransferase from Idiomarina loihiensis (strain ATCC BAA-735 / DSM 15497 / L2-TR).